The primary structure comprises 153 residues: UPF0756 membrane protein lwe1581 (153 aa).

A run of 4 helical transmembrane segments spans residues 6-26 (MLFL…SLII), 54-74 (WGVT…QIGF), 80-100 (SFKS…SILA), and 117-137 (LVFG…GPVI).

The protein belongs to the UPF0756 family.

It is found in the cell membrane. The chain is UPF0756 membrane protein lwe1581 from Listeria welshimeri serovar 6b (strain ATCC 35897 / DSM 20650 / CCUG 15529 / CIP 8149 / NCTC 11857 / SLCC 5334 / V8).